The following is a 294-amino-acid chain: 4-hydroxy-tetrahydrodipicolinate synthase (294 aa).

Pyruvate is bound at residue Thr-44. The Proton donor/acceptor role is filled by Tyr-132. Lys-160 functions as the Schiff-base intermediate with substrate in the catalytic mechanism. Val-202 is a binding site for pyruvate.

The protein belongs to the DapA family. As to quaternary structure, homotetramer; dimer of dimers.

The protein resides in the cytoplasm. The catalysed reaction is L-aspartate 4-semialdehyde + pyruvate = (2S,4S)-4-hydroxy-2,3,4,5-tetrahydrodipicolinate + H2O + H(+). Its pathway is amino-acid biosynthesis; L-lysine biosynthesis via DAP pathway; (S)-tetrahydrodipicolinate from L-aspartate: step 3/4. Its function is as follows. Catalyzes the condensation of (S)-aspartate-beta-semialdehyde [(S)-ASA] and pyruvate to 4-hydroxy-tetrahydrodipicolinate (HTPA). The protein is 4-hydroxy-tetrahydrodipicolinate synthase of Leptospira borgpetersenii serovar Hardjo-bovis (strain JB197).